A 423-amino-acid chain; its full sequence is Large ribosomal subunit protein mL37 (423 aa).

Residues Met-1 to Gly-29 constitute a mitochondrion transit peptide.

The protein belongs to the mitochondrion-specific ribosomal protein mL37 family. Component of the mitochondrial large ribosomal subunit (mt-LSU). Mature mammalian 55S mitochondrial ribosomes consist of a small (28S) and a large (39S) subunit. The 28S small subunit contains a 12S ribosomal RNA (12S mt-rRNA) and 30 different proteins. The 39S large subunit contains a 16S rRNA (16S mt-rRNA), a copy of mitochondrial valine transfer RNA (mt-tRNA(Val)), which plays an integral structural role, and 52 different proteins. mL37 forms a heterodimer with mL65.

It is found in the mitochondrion. The chain is Large ribosomal subunit protein mL37 (MRPL37) from Homo sapiens (Human).